A 342-amino-acid chain; its full sequence is MVQNIAILGASGYTGAELVRLIATHPSMRIVALSGDRKAGMAMAEVFPFLRHLDLPRLQKIEEIDFSSVDLAFCALPHATSQAVIAGLPRDLKIVDLSADFRLRDPAAYETWYGKPHAAPELQKEAVYGLTEFYRDEIRAARLVAGTGCNAATGQYAIRPLIEAGVIDLDDILIDLKAGVSGAGRSLKENLLHAELSEGTHAYSAGGRHRHLGEFDQEFSKIAGRPVQVRFTPHLTPMNRGILANVYVKGDPQAVHRALTERYLTETFLEVLPFGALPSTRDIRGSNYVHIGVIGDRVPGCAMVVAVLDNLCKGSSGQAIQNANLMLGLDEAEGLRLAPVFP.

Cys-149 is a catalytic residue.

Belongs to the NAGSA dehydrogenase family. Type 1 subfamily.

The protein localises to the cytoplasm. The catalysed reaction is N-acetyl-L-glutamate 5-semialdehyde + phosphate + NADP(+) = N-acetyl-L-glutamyl 5-phosphate + NADPH + H(+). Its pathway is amino-acid biosynthesis; L-arginine biosynthesis; N(2)-acetyl-L-ornithine from L-glutamate: step 3/4. In terms of biological role, catalyzes the NADPH-dependent reduction of N-acetyl-5-glutamyl phosphate to yield N-acetyl-L-glutamate 5-semialdehyde. This is N-acetyl-gamma-glutamyl-phosphate reductase from Cereibacter sphaeroides (strain KD131 / KCTC 12085) (Rhodobacter sphaeroides).